The sequence spans 83 residues: Neurotoxin-1'' (83 aa).

The N-terminal stretch at 1–19 (MNYLVMISLALLLMIGVES) is a signal peptide. An LCN-type CS-alpha/beta domain is found at 21-82 (RDGYIVYPNN…PIKDTSRKCT (62 aa)). Intrachain disulfides connect C31/C81, C35/C53, C39/C63, and C43/C65. Position 83 (R83) is a propeptide, removed by a carboxypeptidase (in neurotoxin-1/1').

The protein belongs to the long (4 C-C) scorpion toxin superfamily. Sodium channel inhibitor family. Alpha subfamily. In terms of tissue distribution, expressed by the venom gland.

It localises to the secreted. Functionally, alpha toxins bind voltage-independently at site-3 of sodium channels (Nav) and inhibit the inactivation of the activated channels, thereby blocking neuronal transmission. Is active against mammals and binds with high affinity rat brain synaptosomes. The chain is Neurotoxin-1'' from Androctonus australis (Sahara scorpion).